A 313-amino-acid polypeptide reads, in one-letter code: Proline iminopeptidase (313 aa).

The AB hydrolase-1 domain occupies 35-298 (KPVVMLHGGP…SPASGHSAFE (264 aa)). Residue S110 is the Nucleophile of the active site. D266 is a catalytic residue. H294 serves as the catalytic Proton donor.

This sequence belongs to the peptidase S33 family. Homooligomer.

The protein localises to the cytoplasm. The catalysed reaction is Release of N-terminal proline from a peptide.. Its function is as follows. May be involved in proline metabolism and sensitivity to ascamycin. Has ascamycin dealanylating activity. The chain is Proline iminopeptidase (pip) from Xanthomonas citri (Xanthomonas campestris pv. citri).